A 449-amino-acid chain; its full sequence is Tubulin beta-7 chain (449 aa).

Positions 11, 69, 138, 142, 143, 144, 204, and 226 each coordinate GTP. Glu69 lines the Mg(2+) pocket. The disordered stretch occupies residues 422–449 (YQQYQDATADEEGEYEEEEAEYEQEETY). Residues 429 to 449 (TADEEGEYEEEEAEYEQEETY) are compositionally biased toward acidic residues.

It belongs to the tubulin family. In terms of assembly, dimer of alpha and beta chains. A typical microtubule is a hollow water-filled tube with an outer diameter of 25 nm and an inner diameter of 15 nM. Alpha-beta heterodimers associate head-to-tail to form protofilaments running lengthwise along the microtubule wall with the beta-tubulin subunit facing the microtubule plus end conferring a structural polarity. Microtubules usually have 13 protofilaments but different protofilament numbers can be found in some organisms and specialized cells. Requires Mg(2+) as cofactor.

It localises to the cytoplasm. It is found in the cytoskeleton. In terms of biological role, tubulin is the major constituent of microtubules, a cylinder consisting of laterally associated linear protofilaments composed of alpha- and beta-tubulin heterodimers. Microtubules grow by the addition of GTP-tubulin dimers to the microtubule end, where a stabilizing cap forms. Below the cap, tubulin dimers are in GDP-bound state, owing to GTPase activity of alpha-tubulin. The protein is Tubulin beta-7 chain (TUBB7) of Arabidopsis thaliana (Mouse-ear cress).